Reading from the N-terminus, the 331-residue chain is Nucleotide sugar transporter SLC35B4 (331 aa).

The next 11 helical transmembrane spans lie at 4-24 (ALAVGLVFAGCCSNVIFLELL), 30-50 (GCGNIVTFAQFLFIAVEGFLF), 59-79 (PAIPIRYYAIMVTMFFTVSVV), 92-112 (LHMIFRSGSLIANMILGIIIL), 117-137 (SIFKYTSIALVSVGIFICTFM), 153-173 (GFQAFVWWLLGIGALTFALLM), 201-221 (ALPLPGFVFLASDIYDHAVLF), 229-249 (IPVIGVTLPIMWFYLLMNIIT), 251-267 (YVCIRGVFILTTECASL), 268-288 (TVTLVVTLRKFVSLIFSILYF), and 291-311 (PFTLWHWLGTLFVFIGTLMYT). The Mediates endoplasmic reticulum retention signature appears at 326 to 331 (KDSKKN).

It belongs to the nucleotide-sugar transporter family. SLC35B subfamily.

The protein resides in the endoplasmic reticulum membrane. The enzyme catalyses UDP-N-acetyl-alpha-D-glucosamine(in) + UDP-alpha-D-glucuronate(out) = UDP-N-acetyl-alpha-D-glucosamine(out) + UDP-alpha-D-glucuronate(in). The catalysed reaction is UDP-alpha-D-xylose(in) + UDP-alpha-D-glucuronate(out) = UDP-alpha-D-xylose(out) + UDP-alpha-D-glucuronate(in). In terms of biological role, antiporter that transports nucleotide sugars across the endoplasmic reticulum (ER) membrane in exchange for another nucleotide sugar. May couple UDP-alpha-D-glucuronate (UDP-GlcA) or UDP-alpha-D-xylose (UDP-Xyl) efflux to UDP-alpha-D-glucuronate (UDP-GlcA) influx into the ER lumen, which in turn stimulates glucuronidation and excretion of endobiotics and xenobiotics. In Pongo abelii (Sumatran orangutan), this protein is Nucleotide sugar transporter SLC35B4 (SLC35B4).